The sequence spans 426 residues: Enolase (426 aa).

Residue Q163 participates in (2R)-2-phosphoglycerate binding. Catalysis depends on E205, which acts as the Proton donor. Positions 242, 286, and 313 each coordinate Mg(2+). The (2R)-2-phosphoglycerate site is built by K338, R367, S368, and K389. The active-site Proton acceptor is K338.

It belongs to the enolase family. It depends on Mg(2+) as a cofactor.

Its subcellular location is the cytoplasm. The protein resides in the secreted. It localises to the cell surface. It carries out the reaction (2R)-2-phosphoglycerate = phosphoenolpyruvate + H2O. Its pathway is carbohydrate degradation; glycolysis; pyruvate from D-glyceraldehyde 3-phosphate: step 4/5. Catalyzes the reversible conversion of 2-phosphoglycerate (2-PG) into phosphoenolpyruvate (PEP). It is essential for the degradation of carbohydrates via glycolysis. The polypeptide is Enolase (Helicobacter pylori (strain Shi470)).